A 506-amino-acid chain; its full sequence is MLYAAPGTADAIFAFKPRYDNFIDGTWQPPVRGEYFDNVTPITGKVFCKAARSTEEDITLALDAAHAAADRWGRTTAAERALILNRIADRLQDNLETLAYVESIDNGKPIRETLAADIPLAIDHFRYFAACIRAQEGSLSQIDETTIAYHFNEPLGVVGQIIPWNFPILMATWKLAPALAAGNCIVLKPAEQTPISILVLTELIADLLPPGVLNVVNGFGLEAGKPLASSKRIAKIAFTGETATGRLIMQYASQNLIPVTLELGGKSPNVFFDDIASADDSFFDKAVEGFVMFALNQGEICTCPSRALIHESLYDRFIERALARVAVIKQGSPLDTETMIGAQASTEQMDKILSYMDIGREEGATVLAGGARAELGGELDGGYYVQPTVFKGNNSMRIFQEEIFGPVVAVTTFKDEDEALHLANDTHYGLGSGVWTRDGNRAFRFGRGIKAGRVWTNCYHLYPAHAAFGGYKQSGIGRENHHMMLDHYQQTKNLLVSYDPKAMGFF.

218–224 (GFGLEAG) provides a ligand contact to NAD(+). Active-site residues include Glu262 and Cys301.

This sequence belongs to the aldehyde dehydrogenase family.

The catalysed reaction is an aldehyde + NAD(+) + H2O = a carboxylate + NADH + 2 H(+). The polypeptide is Aldehyde dehydrogenase (Rhodospirillum rubrum (strain ATCC 11170 / ATH 1.1.1 / DSM 467 / LMG 4362 / NCIMB 8255 / S1)).